An 858-amino-acid polypeptide reads, in one-letter code: Ubiquitin carboxyl-terminal hydrolase 5 (858 aa).

Position 2 is an N-acetylalanine (A2). The disordered stretch occupies residues 73–98; the sequence is LRRTRRPKEEDTSAGTGDPPRKKPTR. Residue K113 forms a Glycyl lysine isopeptide (Lys-Gly) (interchain with G-Cter in SUMO) linkage. S149 and S156 each carry phosphoserine. The UBP-type; degenerate zinc-finger motif lies at 175–283; the sequence is QVSKHAFNLK…EHLSHFGIDM (109 aa). C195 and C816 are joined by a disulfide. The Zn(2+) site is built by C199 and C202. W209 is a substrate binding site. Position 219 (C219) interacts with Zn(2+). Position 221–224 (221–224) interacts with substrate; it reads RRYF. H232 is a binding site for Zn(2+). Y259, Y261, and D264 together coordinate substrate. T292 carries the phosphothreonine modification. The 531-residue stretch at 326-856 folds into the USP domain; sequence TGIRNLGNSC…LGYIYFYQRV (531 aa). The active-site Nucleophile is the C335. T623 carries the phosphothreonine modification. UBA domains lie at 654–695 and 722–762; these read MLDE…VMSH and PPPE…IFSH. Residues S779, S783, and S785 each carry the phosphoserine modification. Residue H818 is the Proton acceptor of the active site.

The protein belongs to the peptidase C19 family. Homodimer. Interacts with TRIML1. In terms of processing, SUMOylated at Lys-113; SUMOylation affects the interaction with Cav3.2 channels. Post-translationally, ubiquitinated by SMURF1; leading to proteasomal degradation.

Its subcellular location is the cytoplasm. It localises to the stress granule. It is found in the nucleus. The enzyme catalyses Thiol-dependent hydrolysis of ester, thioester, amide, peptide and isopeptide bonds formed by the C-terminal Gly of ubiquitin (a 76-residue protein attached to proteins as an intracellular targeting signal).. Deubiquitinating enzyme that participates in a wide range of cellular processes by specifically cleaving isopeptide bonds between ubiquitin and substrate proteins or ubiquitin itself. Affects thereby important cellular signaling pathways such as NF-kappa-B, Wnt/beta-catenin, and cytokine production by regulating ubiquitin-dependent protein degradation. Participates in the activation of the Wnt signaling pathway by promoting FOXM1 deubiquitination and stabilization that induces the recruitment of beta-catenin to Wnt target gene promoter. Regulates the assembly and disassembly of heat-induced stress granules by mediating the hydrolysis of unanchored ubiquitin chains. Promotes lipopolysaccharide-induced apoptosis and inflammatory response by stabilizing the TXNIP protein. Affects T-cell biology by stabilizing the inhibitory receptor on T-cells PDC1. Acts as a negative regulator of autophagy by regulating ULK1 at both protein and mRNA levels. Acts also as a negative regulator of type I interferon production by simultaneously removing both 'Lys-48'-linked unanchored and 'Lys-63'-linked anchored polyubiquitin chains on the transcription factor IRF3. Modulates the stability of DNA mismatch repair protein MLH1 and counteracts the effect of the ubiquitin ligase UBR4. Upon activation by insulin, it gets phosphorylated through mTORC1-mediated phosphorylation to enhance YTHDF1 stability by removing 'Lys-11'-linked polyubiquitination. May also deubiquitinate other substrates such as the calcium channel CACNA1H. This is Ubiquitin carboxyl-terminal hydrolase 5 (Usp5) from Mus musculus (Mouse).